A 357-amino-acid polypeptide reads, in one-letter code: F-box only protein 25 (357 aa).

The segment at 1–83 (MPFLGQDWRS…DTAAHSFYRE (83 aa)) is interaction with beta-actin. The region spanning 225-273 (LTLSDLPLHMLNNILYRFSDGWDIVTLGQVTPTLYMLSEDRRLWKRLCQ) is the F-box domain.

As to quaternary structure, part of a SCF (SKP1-cullin-F-box) protein ligase complex consisting of FBXO25, SKP1, CUL1 and RBX1. Interacts directly with SKP1 and CUL1. Interacts (via C-terminus) with beta-actin (via N-terminus). As to expression, expressed in all tissues tested, except striated muscle (at protein level). Expressed predominantly in the cerebral cortex, the hippocampus and the Purkinje cell layer of the brain. Intestine and kidney show also significant levels.

The protein localises to the nucleus. Its pathway is protein modification; protein ubiquitination. In terms of biological role, substrate-recognition component of the SCF (SKP1-CUL1-F-box protein)-type E3 ubiquitin ligase complex. May play a role in accumulation of expanded polyglutamine (polyQ) protein huntingtin (HTT). In Mus musculus (Mouse), this protein is F-box only protein 25 (Fbxo25).